Reading from the N-terminus, the 151-residue chain is Cytochrome c-type biogenesis protein CcmE (151 aa).

Over Met-1–Arg-8 the chain is Cytoplasmic. Residues Leu-9–Ala-29 traverse the membrane as a helical; Signal-anchor for type II membrane protein segment. Residues Leu-30–Pro-151 lie on the Periplasmic side of the membrane. Heme-binding residues include His-124 and Tyr-128.

This sequence belongs to the CcmE/CycJ family.

It is found in the cell inner membrane. Heme chaperone required for the biogenesis of c-type cytochromes. Transiently binds heme delivered by CcmC and transfers the heme to apo-cytochromes in a process facilitated by CcmF and CcmH. This Pseudomonas putida (strain ATCC 700007 / DSM 6899 / JCM 31910 / BCRC 17059 / LMG 24140 / F1) protein is Cytochrome c-type biogenesis protein CcmE.